The chain runs to 169 residues: Dihydrofolate reductase type 8 (169 aa).

The DHFR domain occupies 3-169; that stretch reads ELHAILAATA…FTYRKKELTE (167 aa).

It belongs to the dihydrofolate reductase family. As to quaternary structure, homodimer.

The catalysed reaction is (6S)-5,6,7,8-tetrahydrofolate + NADP(+) = 7,8-dihydrofolate + NADPH + H(+). Its pathway is cofactor biosynthesis; tetrahydrofolate biosynthesis; 5,6,7,8-tetrahydrofolate from 7,8-dihydrofolate: step 1/1. Key enzyme in folate metabolism. Catalyzes an essential reaction for de novo glycine and purine synthesis, and for DNA precursor synthesis. This is Dihydrofolate reductase type 8 (dhfrVIII) from Escherichia coli.